The primary structure comprises 317 residues: Ribosomal protein L11 methyltransferase (317 aa).

S-adenosyl-L-methionine-binding residues include Thr169, Gly190, Asp211, and Asn256.

The protein belongs to the methyltransferase superfamily. PrmA family.

Its subcellular location is the cytoplasm. The enzyme catalyses L-lysyl-[protein] + 3 S-adenosyl-L-methionine = N(6),N(6),N(6)-trimethyl-L-lysyl-[protein] + 3 S-adenosyl-L-homocysteine + 3 H(+). In terms of biological role, methylates ribosomal protein L11. In Helicobacter hepaticus (strain ATCC 51449 / 3B1), this protein is Ribosomal protein L11 methyltransferase.